The following is a 493-amino-acid chain: Proline--tRNA ligase (493 aa).

This sequence belongs to the class-II aminoacyl-tRNA synthetase family. ProS type 3 subfamily. In terms of assembly, homodimer.

It localises to the cytoplasm. It catalyses the reaction tRNA(Pro) + L-proline + ATP = L-prolyl-tRNA(Pro) + AMP + diphosphate. Its function is as follows. Catalyzes the attachment of proline to tRNA(Pro) in a two-step reaction: proline is first activated by ATP to form Pro-AMP and then transferred to the acceptor end of tRNA(Pro). This is Proline--tRNA ligase from Parabacteroides distasonis (strain ATCC 8503 / DSM 20701 / CIP 104284 / JCM 5825 / NCTC 11152).